The chain runs to 252 residues: Phosphoglycolate phosphatase (252 aa).

D13 acts as the Nucleophile in catalysis. Mg(2+) is bound by residues D13, D15, and D192.

The protein belongs to the HAD-like hydrolase superfamily. CbbY/CbbZ/Gph/YieH family. Monomer. Requires Mg(2+) as cofactor. It depends on chloride as a cofactor.

It catalyses the reaction 2-phosphoglycolate + H2O = glycolate + phosphate. It functions in the pathway organic acid metabolism; glycolate biosynthesis; glycolate from 2-phosphoglycolate: step 1/1. Its function is as follows. Specifically catalyzes the dephosphorylation of 2-phosphoglycolate. Is involved in the dissimilation of the intracellular 2-phosphoglycolate formed during the DNA repair of 3'-phosphoglycolate ends, a major class of DNA lesions induced by oxidative stress. The chain is Phosphoglycolate phosphatase from Shigella boydii serotype 4 (strain Sb227).